The chain runs to 334 residues: Dolichyl-phosphate beta-glucosyltransferase (334 aa).

The Lumenal portion of the chain corresponds to 1 to 12 (MRALRFLIENRN). A helical membrane pass occupies residues 13 to 33 (TVFFTLLVALVLSLYLLVYLF). Residues 34–334 (SHTPRPPYPE…LGIYRDNKKC (301 aa)) lie on the Cytoplasmic side of the membrane.

Belongs to the glycosyltransferase 2 family.

It is found in the endoplasmic reticulum membrane. It catalyses the reaction a di-trans,poly-cis-dolichyl phosphate + UDP-alpha-D-glucose = a di-trans,poly-cis-dolichyl beta-D-glucosyl phosphate + UDP. It functions in the pathway protein modification; protein glycosylation. Endoplasmic reticulum membrane-bound UDP-glucose:dolichyl-phosphate glucosyltransferase involved in protein N-linked glycosylation. The polypeptide is Dolichyl-phosphate beta-glucosyltransferase (Saccharomyces cerevisiae (strain ATCC 204508 / S288c) (Baker's yeast)).